The primary structure comprises 164 residues: Putative HTH-type transcriptional regulator ORF2 (164 aa).

Residues Arg-2–Ala-131 enclose the HTH rrf2-type domain.

The sequence is that of Putative HTH-type transcriptional regulator ORF2 from Azotobacter vinelandii.